Here is a 156-residue protein sequence, read N- to C-terminus: MNLNATIFFQMLVFFVLGWFTMKFVWPPLTKAIDERRQKIADGLAAAEKGKADLAQAQARVSLIEASAKSETHARIIEAEKQAASVIEQARREAEAERARIVAQAAQDAAQEVQRAREALRDDVAALAVKGAEQILKREVDARAHAELLNQLKAQL.

Residues 7-27 traverse the membrane as a helical segment; sequence IFFQMLVFFVLGWFTMKFVWP.

The protein belongs to the ATPase B chain family. As to quaternary structure, F-type ATPases have 2 components, F(1) - the catalytic core - and F(0) - the membrane proton channel. F(1) has five subunits: alpha(3), beta(3), gamma(1), delta(1), epsilon(1). F(0) has three main subunits: a(1), b(2) and c(10-14). The alpha and beta chains form an alternating ring which encloses part of the gamma chain. F(1) is attached to F(0) by a central stalk formed by the gamma and epsilon chains, while a peripheral stalk is formed by the delta and b chains.

The protein resides in the cell inner membrane. Functionally, f(1)F(0) ATP synthase produces ATP from ADP in the presence of a proton or sodium gradient. F-type ATPases consist of two structural domains, F(1) containing the extramembraneous catalytic core and F(0) containing the membrane proton channel, linked together by a central stalk and a peripheral stalk. During catalysis, ATP synthesis in the catalytic domain of F(1) is coupled via a rotary mechanism of the central stalk subunits to proton translocation. In terms of biological role, component of the F(0) channel, it forms part of the peripheral stalk, linking F(1) to F(0). This Bordetella bronchiseptica (strain ATCC BAA-588 / NCTC 13252 / RB50) (Alcaligenes bronchisepticus) protein is ATP synthase subunit b.